A 98-amino-acid chain; its full sequence is NADH-ubiquinone oxidoreductase chain 4L (98 aa).

3 helical membrane-spanning segments follow: residues 1 to 21 (MTSINLNLTMAFSLALTGVLV), 28 to 48 (STLLCLEGMMLSLFILMALLI), and 59 to 79 (APLILLVFSACEAGVGLALLV).

This sequence belongs to the complex I subunit 4L family. In terms of assembly, core subunit of respiratory chain NADH dehydrogenase (Complex I) which is composed of 45 different subunits.

Its subcellular location is the mitochondrion inner membrane. The enzyme catalyses a ubiquinone + NADH + 5 H(+)(in) = a ubiquinol + NAD(+) + 4 H(+)(out). Functionally, core subunit of the mitochondrial membrane respiratory chain NADH dehydrogenase (Complex I) which catalyzes electron transfer from NADH through the respiratory chain, using ubiquinone as an electron acceptor. Part of the enzyme membrane arm which is embedded in the lipid bilayer and involved in proton translocation. This is NADH-ubiquinone oxidoreductase chain 4L (MT-ND4L) from Dactylopsila trivirgata (Striped possum).